The following is a 402-amino-acid chain: Tyrosine--tRNA ligase (402 aa).

Residues Pro48 to His57 carry the 'HIGH' region motif. The 'KMSKS' region signature appears at Lys235–Ser239. Lys238 is an ATP binding site. In terms of domain architecture, S4 RNA-binding spans Ala338 to Leu402.

It belongs to the class-I aminoacyl-tRNA synthetase family. TyrS type 2 subfamily. In terms of assembly, homodimer.

The protein resides in the cytoplasm. It catalyses the reaction tRNA(Tyr) + L-tyrosine + ATP = L-tyrosyl-tRNA(Tyr) + AMP + diphosphate + H(+). Its function is as follows. Catalyzes the attachment of tyrosine to tRNA(Tyr) in a two-step reaction: tyrosine is first activated by ATP to form Tyr-AMP and then transferred to the acceptor end of tRNA(Tyr). The polypeptide is Tyrosine--tRNA ligase (Synechococcus elongatus (strain ATCC 33912 / PCC 7942 / FACHB-805) (Anacystis nidulans R2)).